A 98-amino-acid chain; its full sequence is Integration host factor subunit alpha (98 aa).

Residues 49–70 form a disordered region; that stretch reads FGNFDLRDKNQRPGRNPKTGED.

It belongs to the bacterial histone-like protein family. In terms of assembly, heterodimer of an alpha and a beta chain.

In terms of biological role, this protein is one of the two subunits of integration host factor, a specific DNA-binding protein that functions in genetic recombination as well as in transcriptional and translational control. This chain is Integration host factor subunit alpha, found in Sodalis glossinidius (strain morsitans).